Consider the following 1273-residue polypeptide: DNA-directed RNA polymerase subunit beta (1273 aa).

This sequence belongs to the RNA polymerase beta chain family. In terms of assembly, the RNAP catalytic core consists of 2 alpha, 1 beta, 1 beta' and 1 omega subunit. When a sigma factor is associated with the core the holoenzyme is formed, which can initiate transcription.

The catalysed reaction is RNA(n) + a ribonucleoside 5'-triphosphate = RNA(n+1) + diphosphate. Its function is as follows. DNA-dependent RNA polymerase catalyzes the transcription of DNA into RNA using the four ribonucleoside triphosphates as substrates. This Phytoplasma mali (strain AT) protein is DNA-directed RNA polymerase subunit beta.